The sequence spans 152 residues: Small ribosomal subunit protein uS11A (152 aa).

The interval 131 to 152 (EDVTPIPSDSTRRKGGRRGRRL) is disordered. Residues 143–152 (RKGGRRGRRL) are compositionally biased toward basic residues.

Belongs to the universal ribosomal protein uS11 family.

This chain is Small ribosomal subunit protein uS11A, found in Anopheles gambiae (African malaria mosquito).